The chain runs to 342 residues: Protein RecA (342 aa).

65–72 (GPESSGKT) provides a ligand contact to ATP.

The protein belongs to the RecA family.

It is found in the cytoplasm. Functionally, can catalyze the hydrolysis of ATP in the presence of single-stranded DNA, the ATP-dependent uptake of single-stranded DNA by duplex DNA, and the ATP-dependent hybridization of homologous single-stranded DNAs. It interacts with LexA causing its activation and leading to its autocatalytic cleavage. This Teredinibacter turnerae (strain ATCC 39867 / T7901) protein is Protein RecA.